The following is a 751-amino-acid chain: Collagen alpha-1(XIII) chain (751 aa).

A disordered region spans residues 1–24 (MVAERTRKAAASGSRGPGELGAPG). Over 1 to 40 (MVAERTRKAAASGSRGPGELGAPGPGTVALAEQCARLPSP) the chain is Cytoplasmic. Positions 1-119 (MVAERTRKAA…KMSPGCNCPP (119 aa)) are nonhelical region 1 (NC1). A compositionally biased stretch (gly residues) spans 15-24 (RGPGELGAPG). The chain crosses the membrane as a helical; Signal-anchor for type II membrane protein span at residues 41–59 (GCCGLLALALCSLALSLLA). Topologically, residues 60–751 (HFRTAELQAR…GLPVQGCWNK (692 aa)) are extracellular. Disordered regions lie at residues 108 to 127 (APKM…PTGR), 190 to 225 (PGHP…EYPH), and 265 to 449 (TFQG…EMVD). A compositionally biased stretch (pro residues) spans 116–125 (NCPPGPPGPT). Residues 120 to 223 (GPPGPTGRPG…KGEKGQCGEY (104 aa)) are triple-helical region 1 (COL1). The span at 204–213 (PRGQPGPQGQ) shows a compositional bias: low complexity. Basic and acidic residues predominate over residues 214-225 (KGEKGQCGEYPH). A nonhelical region 2 (NC2) region spans residues 224-273 (PHREYPGGMLAALRSNPIMSLKLLPLLNSVRLAPPPVIKRRTFQGEQSQT). Residues 274–445 (GIQGPPGPPG…KGAKGEPGKG (172 aa)) form a triple-helical region 2 (COL2) region. 3 stretches are compositionally biased toward pro residues: residues 278–288 (PPGPPGPPGPS), 296–312 (LPGP…PGPK), and 391–402 (PGPPGLPGPPGP). The segment covering 403 to 436 (KGEAGVDGQAGPPGQQGDKGQPGAAGEQGPSGPK) has biased composition (low complexity). Basic and acidic residues predominate over residues 438-447 (AKGEPGKGEM). Positions 446-467 (EMVDYNGSINEALQEIRTLALM) are nonhelical region 3 (NC3). Asn-451 is a glycosylation site (N-linked (GlcNAc...) asparagine). Residues 466 to 751 (LMGPPGLPGQ…GLPVQGCWNK (286 aa)) are disordered. The segment at 468–733 (GPPGLPGQTG…KGDQGAPGLD (266 aa)) is triple-helical region 3 (COL3). Residues 470-484 (PGLPGQTGPPGPPGT) show a composition bias toward pro residues. Basic and acidic residues-rich tracts occupy residues 499–509 (HDGDKGPRGKP), 557–568 (TGEKGEPGDEGR), and 586–596 (EKGEAGEKGDP). Residues 601–613 (PGPPGPEGPPGPP) are compositionally biased toward pro residues. The span at 615–628 (LQGFPGPKGEAGLE) shows a compositional bias: low complexity. The segment covering 630–643 (SKGEKGSQGEKGDR) has biased composition (basic and acidic residues). Residues 658–673 (PGPPGTPGPIGVPGPA) show a composition bias toward pro residues. A compositionally biased stretch (low complexity) spans 684-699 (DPGMTGPTGAAGLPGL). Residues 706 to 726 (KGNRGERGKKGSRGPKGDKGD) are compositionally biased toward basic and acidic residues. Positions 734–751 (APCPLGEDGLPVQGCWNK) are nonhelical region 4 (NC4).

Homotrimer; disulfide-linked. Nucleation of the type XIII collagen triple helix is likely to occur at the N-terminal region with triple helix formation proceeding from the N- to the C-terminus. Interacts with FN1, perlecan/HSPG2 and NID2.

Its subcellular location is the cell membrane. It is found in the postsynaptic cell membrane. In terms of biological role, involved in cell-matrix and cell-cell adhesion interactions that are required for normal development. May participate in the linkage between muscle fiber and basement membrane. May play a role in endochondral ossification of bone and branching morphogenesis of lung. Binds heparin. At neuromuscular junctions, may play a role in acetylcholine receptor clustering. In Mus musculus (Mouse), this protein is Collagen alpha-1(XIII) chain.